The sequence spans 254 residues: uncharacterized protein (254 aa).

This sequence belongs to the methyltransferase superfamily.

This is an uncharacterized protein from Mycobacterium tuberculosis (strain ATCC 25177 / H37Ra).